The primary structure comprises 215 residues: NAD(P)H-hydrate epimerase (215 aa).

Residues 10–211 form the YjeF N-terminal domain; that stretch reads AQRYDAHATN…DIGIYAQDRV (202 aa). 58 to 62 is a (6S)-NADPHX binding site; the sequence is NNGGD. 2 residues coordinate K(+): asparagine 59 and aspartate 121. (6S)-NADPHX contacts are provided by residues 125–131 and aspartate 154; that span reads GVGLTRD. Residue serine 157 participates in K(+) binding.

This sequence belongs to the NnrE/AIBP family. It depends on K(+) as a cofactor.

The catalysed reaction is (6R)-NADHX = (6S)-NADHX. It catalyses the reaction (6R)-NADPHX = (6S)-NADPHX. Functionally, catalyzes the epimerization of the S- and R-forms of NAD(P)HX, a damaged form of NAD(P)H that is a result of enzymatic or heat-dependent hydration. This is a prerequisite for the S-specific NAD(P)H-hydrate dehydratase to allow the repair of both epimers of NAD(P)HX. The protein is NAD(P)H-hydrate epimerase of Levilactobacillus brevis (strain ATCC 367 / BCRC 12310 / CIP 105137 / JCM 1170 / LMG 11437 / NCIMB 947 / NCTC 947) (Lactobacillus brevis).